A 363-amino-acid polypeptide reads, in one-letter code: S-adenosylmethionine:tRNA ribosyltransferase-isomerase (363 aa).

This sequence belongs to the QueA family. Monomer.

The protein localises to the cytoplasm. The enzyme catalyses 7-aminomethyl-7-carbaguanosine(34) in tRNA + S-adenosyl-L-methionine = epoxyqueuosine(34) in tRNA + adenine + L-methionine + 2 H(+). It functions in the pathway tRNA modification; tRNA-queuosine biosynthesis. Its function is as follows. Transfers and isomerizes the ribose moiety from AdoMet to the 7-aminomethyl group of 7-deazaguanine (preQ1-tRNA) to give epoxyqueuosine (oQ-tRNA). The polypeptide is S-adenosylmethionine:tRNA ribosyltransferase-isomerase (Magnetococcus marinus (strain ATCC BAA-1437 / JCM 17883 / MC-1)).